A 692-amino-acid polypeptide reads, in one-letter code: Elongation factor G (692 aa).

Positions 8–282 (EKTRNIGIMA…AVLDYLPAPT (275 aa)) constitute a tr-type G domain. GTP-binding positions include 17–24 (AHIDAGKT), 81–85 (DTPGH), and 135–138 (NKMD).

It belongs to the TRAFAC class translation factor GTPase superfamily. Classic translation factor GTPase family. EF-G/EF-2 subfamily.

It is found in the cytoplasm. Its function is as follows. Catalyzes the GTP-dependent ribosomal translocation step during translation elongation. During this step, the ribosome changes from the pre-translocational (PRE) to the post-translocational (POST) state as the newly formed A-site-bound peptidyl-tRNA and P-site-bound deacylated tRNA move to the P and E sites, respectively. Catalyzes the coordinated movement of the two tRNA molecules, the mRNA and conformational changes in the ribosome. The polypeptide is Elongation factor G (Bacillus velezensis (strain DSM 23117 / BGSC 10A6 / LMG 26770 / FZB42) (Bacillus amyloliquefaciens subsp. plantarum)).